The chain runs to 234 residues: Probable ascorbate-specific transmembrane electron transporter 1 (234 aa).

Over 1 to 9 (MGLGVRAAP) the chain is Cytoplasmic. Residues 10-30 (FTYVAHALAVAAATMVLVWCI) form a helical membrane-spanning segment. One can recognise a Cytochrome b561 domain in the interval 13-217 (VAHALAVAAA…FGASVVVAAV (205 aa)). Over 31–48 (HFRGGLAFEATNKNLIFN) the chain is Extracellular. The helical transmembrane segment at 49 to 69 (VHPVLMLIGYIILGSEAIMVY) threads the bilayer. A heme b-binding site is contributed by H50. 65–73 (AIMVYKVLP) contributes to the L-ascorbate binding site. Residues 70-82 (KVLPTWKHDTTKL) are Cytoplasmic-facing. Residues 83-103 (IHLILHAIALVFGAVGIYCAF) form a helical membrane-spanning segment. Residues H84 and H118 each coordinate heme b. The Extracellular segment spans residues 104 to 121 (KFHNESGIANLYSLHSWL). 114 to 123 (LYSLHSWLGI) contacts monodehydro-L-ascorbate radical. Residues 122–142 (GIGTICLYGIQWIFGFVAFFF) form a helical membrane-spanning segment. Residues 143 to 151 (PRASPSVRK) lie on the Cytoplasmic side of the membrane. The helical transmembrane segment at 152-172 (GVLPWHILFGLFVYILALATA) threads the bilayer. H157 is a binding site for heme b. Residues 173 to 194 (ELGFLEKLTFLQSSGLDKYGAE) are Extracellular-facing. A helical membrane pass occupies residues 195 to 215 (AFLVNFTALIVVLFGASVVVA). Residues 216–234 (AVSPARVEEPHEYAPIPES) are Cytoplasmic-facing.

Heme b serves as cofactor.

It is found in the membrane. Two-heme-containing cytochrome. Catalyzes ascorbate-dependent trans-membrane electron transfer by utilizing a concerted H(+)/e(-) transfer mechanism. The sequence is that of Probable ascorbate-specific transmembrane electron transporter 1 from Oryza sativa subsp. japonica (Rice).